The sequence spans 260 residues: Protein TONNEAU 1a (260 aa).

Residues 73-105 enclose the LisH domain; the sequence is SGRLLSALICEYLDWAQLNHTLIVYQPESNLPK. 2 disordered regions span residues 147 to 224 and 236 to 260; these read TQGM…EEVT and DRKT…EGRD. Low complexity predominate over residues 161–175; it reads ESSSSLESRNPPRRS. The span at 248–260 shows a compositional bias: basic and acidic residues; it reads NVRDGTNEEEGRD.

As to quaternary structure, interacts with CEN1, LNG1/TRM2 and LNG2/TRM1 (via C-terminus).

It is found in the cytoplasm. It localises to the cytoskeleton. Involved in the control of the dynamic organization of the cortical cytoskeleton. May play a role in the organization of microtubule arrays at the centrosome through interaction with centrin 1 (CEN1). The chain is Protein TONNEAU 1a (TON1A) from Arabidopsis thaliana (Mouse-ear cress).